Consider the following 244-residue polypeptide: tRNA (guanine-N(7)-)-methyltransferase (244 aa).

The disordered stretch occupies residues 1-24 (MTDSHVPHPESPAVEEGEERPHRR). 4 residues coordinate S-adenosyl-L-methionine: Glu74, Glu99, Asp126, and Asp149. Residue Asp149 is part of the active site. Residues Lys153, Asp185, and 222-225 (TKFE) contribute to the substrate site.

It belongs to the class I-like SAM-binding methyltransferase superfamily. TrmB family.

It catalyses the reaction guanosine(46) in tRNA + S-adenosyl-L-methionine = N(7)-methylguanosine(46) in tRNA + S-adenosyl-L-homocysteine. Its pathway is tRNA modification; N(7)-methylguanine-tRNA biosynthesis. In terms of biological role, catalyzes the formation of N(7)-methylguanine at position 46 (m7G46) in tRNA. The polypeptide is tRNA (guanine-N(7)-)-methyltransferase (Pseudomonas savastanoi pv. phaseolicola (strain 1448A / Race 6) (Pseudomonas syringae pv. phaseolicola (strain 1448A / Race 6))).